A 223-amino-acid chain; its full sequence is 7-cyano-7-deazaguanine synthase (223 aa).

Position 15-25 (15-25 (FSGGQDSTTCL)) interacts with ATP. 4 residues coordinate Zn(2+): Cys-191, Cys-200, Cys-203, and Cys-206.

It belongs to the QueC family. Homodimer. It depends on Zn(2+) as a cofactor.

It catalyses the reaction 7-carboxy-7-deazaguanine + NH4(+) + ATP = 7-cyano-7-deazaguanine + ADP + phosphate + H2O + H(+). It participates in purine metabolism; 7-cyano-7-deazaguanine biosynthesis. In terms of biological role, catalyzes the ATP-dependent conversion of 7-carboxy-7-deazaguanine (CDG) to 7-cyano-7-deazaguanine (preQ(0)). In Staphylococcus epidermidis (strain ATCC 35984 / DSM 28319 / BCRC 17069 / CCUG 31568 / BM 3577 / RP62A), this protein is 7-cyano-7-deazaguanine synthase.